The primary structure comprises 1129 residues: Inositol hexakisphosphate and diphosphoinositol-pentakisphosphate kinase 2 (1129 aa).

Ser-44 bears the Phosphoserine mark. Position 59–60 (59–60) interacts with substrate; the sequence is KK. Residues Arg-140, Lys-193, His-200, and Arg-219 each contribute to the ATP site. 219–220 contacts substrate; it reads RK. Ser-229 bears the Phosphoserine mark. Residues 243–246 and 252–254 each bind ATP; these read EEFM and DVK. Lys-254 and Arg-268 together coordinate substrate. Residues Ser-270, Asp-315, and 327–329 each bind ATP; that span reads DVN. 332–335 contributes to the substrate binding site; sequence SFVK. The tract at residues 377-448 is polyphosphoinositide-binding domain; the sequence is PTTSGTMMEL…VLDIARQLLM (72 aa). A disordered region spans residues 904 to 945; it reads KGCEEDKNLPSGYGYRPASRENEGRRSLKTDDDEPHTSKRDE. The segment covering 921-945 has biased composition (basic and acidic residues); it reads ASRENEGRRSLKTDDDEPHTSKRDE. 3 positions are modified to phosphoserine: Ser-1051, Ser-1058, and Ser-1066. Residues 1070 to 1129 are disordered; the sequence is YTPTKILPTPPAALKSSKASSKAAAGGPSQAMAPHTSSRKKSINSKTEGHEPKKSTGKKR. The span at 1081–1098 shows a compositional bias: low complexity; the sequence is AALKSSKASSKAAAGGPS. Residues Ser-1106 and Ser-1107 each carry the phosphoserine modification.

It belongs to the histidine acid phosphatase family. VIP1 subfamily. Ubiquitously expressed. Expressed in the cochlear and vestibular sensory hair cells, supporting cells and spiral ganglion neurons.

The protein resides in the cytoplasm. Its subcellular location is the cytosol. It catalyses the reaction 1D-myo-inositol hexakisphosphate + ATP = 1-diphospho-1D-myo-inositol 2,3,4,5,6-pentakisphosphate + ADP. The catalysed reaction is 5-diphospho-1D-myo-inositol 1,2,3,4,6-pentakisphosphate + ATP + H(+) = 1,5-bis(diphospho)-1D-myo-inositol 2,3,4,6-tetrakisphosphate + ADP. Its function is as follows. Bifunctional inositol kinase that acts in concert with the IP6K kinases IP6K1, IP6K2 and IP6K3 to synthesize the diphosphate group-containing inositol pyrophosphates diphosphoinositol pentakisphosphate, PP-InsP5, and bis-diphosphoinositol tetrakisphosphate, (PP)2-InsP4. PP-InsP5 and (PP)2-InsP4, also respectively called InsP7 and InsP8, regulate a variety of cellular processes, including apoptosis, vesicle trafficking, cytoskeletal dynamics, exocytosis, insulin signaling and neutrophil activation. Phosphorylates inositol hexakisphosphate (InsP6) at position 1 to produce PP-InsP5 which is in turn phosphorylated by IP6Ks to produce (PP)2-InsP4. Alternatively, phosphorylates PP-InsP5 at position 1, produced by IP6Ks from InsP6, to produce (PP)2-InsP4. Required for normal hearing. This is Inositol hexakisphosphate and diphosphoinositol-pentakisphosphate kinase 2 from Mus musculus (Mouse).